The sequence spans 347 residues: Magnesium-protoporphyrin IX monomethyl ester [oxidative] cyclase (347 aa).

The protein belongs to the AcsF family. Fe cation is required as a cofactor.

The enzyme catalyses Mg-protoporphyrin IX 13-monomethyl ester + 3 NADPH + 3 O2 + 2 H(+) = 3,8-divinyl protochlorophyllide a + 3 NADP(+) + 5 H2O. It participates in porphyrin-containing compound metabolism; chlorophyll biosynthesis (light-independent). In terms of biological role, catalyzes the formation of the isocyclic ring in chlorophyll biosynthesis. Mediates the cyclase reaction, which results in the formation of divinylprotochlorophyllide (Pchlide) characteristic of all chlorophylls from magnesium-protoporphyrin IX 13-monomethyl ester (MgPMME). This is Magnesium-protoporphyrin IX monomethyl ester [oxidative] cyclase from Prochlorococcus marinus (strain SARG / CCMP1375 / SS120).